We begin with the raw amino-acid sequence, 271 residues long: Tetraspanin-11 (271 aa).

The Cytoplasmic segment spans residues 1–7 (MFRVSNF). A helical membrane pass occupies residues 8–28 (MVGLANTLVMLVGASAIGYSI). Residues 29–44 (YMFVHQGVTDCESAIR) lie on the Extracellular side of the membrane. Residues 45–65 (IPLLTTGLILFLVSLLGVIGS) traverse the membrane as a helical segment. The Cytoplasmic portion of the chain corresponds to 66-76 (CFKENLAMVSY). The chain crosses the membrane as a helical span at residues 77–97 (LIILFGGIVALMIFSIFLFFV). Topologically, residues 98–236 (TNKGAGRVVS…LANIREKWRN (139 aa)) are extracellular. 2 N-linked (GlcNAc...) asparagine glycosylation sites follow: asparagine 185 and asparagine 195. Residues 237–257 (LLVFNICLLILLITVYSCGCC) traverse the membrane as a helical segment. The Cytoplasmic segment spans residues 258–271 (ARRNNRTARKSDSV).

It belongs to the tetraspanin (TM4SF) family.

It is found in the membrane. Its function is as follows. May be involved in the regulation of cell differentiation. The polypeptide is Tetraspanin-11 (TET11) (Arabidopsis thaliana (Mouse-ear cress)).